The primary structure comprises 170 residues: Cyclic pyranopterin monophosphate synthase (170 aa).

Substrate is bound by residues 89-91 (LCH) and 125-126 (ME). Aspartate 140 is a catalytic residue.

This sequence belongs to the MoaC family. As to quaternary structure, homohexamer; trimer of dimers.

It catalyses the reaction (8S)-3',8-cyclo-7,8-dihydroguanosine 5'-triphosphate = cyclic pyranopterin phosphate + diphosphate. It participates in cofactor biosynthesis; molybdopterin biosynthesis. Catalyzes the conversion of (8S)-3',8-cyclo-7,8-dihydroguanosine 5'-triphosphate to cyclic pyranopterin monophosphate (cPMP). The chain is Cyclic pyranopterin monophosphate synthase from Streptomyces coelicolor (strain ATCC BAA-471 / A3(2) / M145).